The sequence spans 440 residues: Protein OSB3, chloroplastic/mitochondrial (440 aa).

The transit peptide at 1 to 61 directs the protein to the chloroplast and mitochondrion; that stretch reads MNLISRTLTR…AKVSVKPPLN (61 aa). The SSB domain maps to 80-178; it reads ISNWINLIGF…VMVQNLNFVQ (99 aa). 3 PDF region regions span residues 218-270, 294-342, and 380-428; these read WKHL…LKLE, WKDL…SKLP, and WKNL…SKLP.

As to expression, expressed primarily in the female gametophyte and in the floral abscission zone.

The protein localises to the mitochondrion. It localises to the plastid. The protein resides in the chloroplast. Binds single-stranded DNA. The sequence is that of Protein OSB3, chloroplastic/mitochondrial (OSB3) from Arabidopsis thaliana (Mouse-ear cress).